The chain runs to 188 residues: ATP-dependent protease subunit HslV (188 aa).

The active site involves T14. Na(+) contacts are provided by A173, C176, and T179.

Belongs to the peptidase T1B family. HslV subfamily. As to quaternary structure, a double ring-shaped homohexamer of HslV is capped on each side by a ring-shaped HslU homohexamer. The assembly of the HslU/HslV complex is dependent on binding of ATP.

It localises to the cytoplasm. It catalyses the reaction ATP-dependent cleavage of peptide bonds with broad specificity.. With respect to regulation, allosterically activated by HslU binding. Protease subunit of a proteasome-like degradation complex believed to be a general protein degrading machinery. In Caulobacter vibrioides (strain ATCC 19089 / CIP 103742 / CB 15) (Caulobacter crescentus), this protein is ATP-dependent protease subunit HslV.